We begin with the raw amino-acid sequence, 312 residues long: Cytochrome c biogenesis protein CcsA (312 aa).

8 consecutive transmembrane segments (helical) span residues 18 to 38, 48 to 68, 73 to 93, 102 to 122, 148 to 168, 216 to 236, 250 to 267, and 279 to 299; these read LGIL…LALF, FFTI…WILS, ISNL…GQLL, IIPV…CFVL, VMLS…VLFI, SILV…IWAN, TWAF…HMRI, and FATS…FLGI.

It belongs to the CcmF/CycK/Ccl1/NrfE/CcsA family. In terms of assembly, may interact with ccs1.

It localises to the cellular thylakoid membrane. In terms of biological role, required during biogenesis of c-type cytochromes (cytochrome c6 and cytochrome f) at the step of heme attachment. The chain is Cytochrome c biogenesis protein CcsA from Prochlorococcus marinus (strain MIT 9515).